Reading from the N-terminus, the 623-residue chain is Chaperone protein HtpG (623 aa).

An a; substrate-binding region spans residues 1-336; that stretch reads MSMKGQETRG…SNDLPLNVSR (336 aa). Residues 337-551 are b; that stretch reads EILQDSRVTQ…ADEMSTQMAK (215 aa). Residues 552–623 form a c region; sequence LFAAAGQEAP…IRRMNKLLSA (72 aa).

This sequence belongs to the heat shock protein 90 family. In terms of assembly, homodimer.

It is found in the cytoplasm. In terms of biological role, molecular chaperone. Has ATPase activity. The sequence is that of Chaperone protein HtpG from Serratia proteamaculans (strain 568).